Consider the following 257-residue polypeptide: Photosystem I chlorophyll a/b-binding protein 2, chloroplastic (257 aa).

The transit peptide at 1-43 (MASSLCASSAIAAISSPSFLGGKKLRLKKKLTVPAVSRPDASV) directs the protein to the chloroplast. Tryptophan 55 is a binding site for chlorophyll b. Residues phenylalanine 75, serine 81, and glutamate 94 each coordinate chlorophyll a. Residue arginine 99 coordinates chlorophyll b. 2 helical membrane-spanning segments follow: residues 100 to 120 (WAML…IGIL) and 133 to 153 (YFTD…WAEG). Glutamate 152 and arginine 155 together coordinate chlorophyll b. 6 residues coordinate chlorophyll a: lysine 208, glutamate 209, asparagine 212, arginine 214, glutamine 226, and histidine 241. Residues 215 to 235 (LAMLAVMGAWFQHIYTGTGPI) form a helical membrane-spanning segment.

This sequence belongs to the light-harvesting chlorophyll a/b-binding (LHC) protein family. In terms of assembly, the LHC complex consists of chlorophyll a-b binding proteins. Red-emitting heterodimers with LHCA3 and LHCA5. Binds to carotenoids. Binds at least 14 chlorophylls (8 Chl-a and 6 Chl-b) and carotenoids such as lutein and neoxanthin. serves as cofactor. Photoregulated by reversible phosphorylation of its threonine residues.

The protein localises to the plastid. The protein resides in the chloroplast thylakoid membrane. In terms of biological role, the light-harvesting complex (LHC) functions as a light receptor, it captures and delivers excitation energy to photosystems with which it is closely associated, here photosystem I. The polypeptide is Photosystem I chlorophyll a/b-binding protein 2, chloroplastic (Arabidopsis thaliana (Mouse-ear cress)).